A 330-amino-acid chain; its full sequence is Peroxidase 70 (330 aa).

A signal peptide spans 1-24 (MRSFTNLNPCYVLLPFFLVLATNA). Intrachain disulfides connect cysteine 43–cysteine 119, cysteine 76–cysteine 81, cysteine 125–cysteine 326, and cysteine 202–cysteine 234. Catalysis depends on histidine 74, which acts as the Proton acceptor. 5 residues coordinate Ca(2+): aspartate 75, valine 78, glycine 80, aspartate 82, and serine 84. A substrate-binding site is contributed by proline 165. Histidine 195 serves as a coordination point for heme b. Threonine 196 serves as a coordination point for Ca(2+). Ca(2+) is bound by residues aspartate 247, serine 250, and aspartate 255.

This sequence belongs to the peroxidase family. Classical plant (class III) peroxidase subfamily. The cofactor is heme b. Ca(2+) serves as cofactor.

The protein resides in the secreted. It carries out the reaction 2 a phenolic donor + H2O2 = 2 a phenolic radical donor + 2 H2O. In terms of biological role, removal of H(2)O(2), oxidation of toxic reductants, biosynthesis and degradation of lignin, suberization, auxin catabolism, response to environmental stresses such as wounding, pathogen attack and oxidative stress. These functions might be dependent on each isozyme/isoform in each plant tissue. This is Peroxidase 70 (PER70) from Arabidopsis thaliana (Mouse-ear cress).